A 177-amino-acid polypeptide reads, in one-letter code: Large ribosomal subunit protein uL5c (177 aa).

It belongs to the universal ribosomal protein uL5 family. Part of the 50S ribosomal subunit; contacts the 5S rRNA.

The protein resides in the plastid. The protein localises to the chloroplast. Its function is as follows. Binds 5S rRNA, forms part of the central protuberance of the 50S subunit. This chain is Large ribosomal subunit protein uL5c (rpl5), found in Cyanidioschyzon merolae (strain NIES-3377 / 10D) (Unicellular red alga).